Consider the following 270-residue polypeptide: GTP cyclohydrolase FolE2 2 (270 aa).

This sequence belongs to the GTP cyclohydrolase IV family.

It catalyses the reaction GTP + H2O = 7,8-dihydroneopterin 3'-triphosphate + formate + H(+). The protein operates within cofactor biosynthesis; 7,8-dihydroneopterin triphosphate biosynthesis; 7,8-dihydroneopterin triphosphate from GTP: step 1/1. In terms of biological role, converts GTP to 7,8-dihydroneopterin triphosphate. The chain is GTP cyclohydrolase FolE2 2 from Dechloromonas aromatica (strain RCB).